Here is a 288-residue protein sequence, read N- to C-terminus: Syntaxin-1A (288 aa).

Over residues Met-1–Asp-13 the composition is skewed to basic and acidic residues. The interval Met-1–Val-20 is disordered. Residues Met-1–Lys-265 are Cytoplasmic-facing. Phosphoserine is present on residues Ser-14, Ser-64, and Ser-95. Residues Asp-68 to Ser-109 adopt a coiled-coil conformation. Position 188 is a phosphoserine; by DAPK1 (Ser-188). One can recognise a t-SNARE coiled-coil homology domain in the interval Leu-192–Ala-254. Residues Lys-252, Lys-253, and Lys-256 each participate in a glycyl lysine isopeptide (Lys-Gly) (interchain with G-Cter in SUMO) cross-link. A helical; Anchor for type IV membrane protein membrane pass occupies residues Ile-266–Gly-288.

It belongs to the syntaxin family. Part of the SNARE core complex containing SNAP25, VAMP2 and STX1A; this complex constitutes the basic catalytic machinery of the complex neurotransmitter release apparatus. The SNARE complex interacts with CPLX1. Interacts with STXBP1. The interaction with STXBP1 promotes assembly of the SNARE complex. Interacts (via C-terminus) with KCNB1 (via C-terminus); the interaction increases in a calcium-dependent manner and induces a pore-independent enhancement of exocytosis in neuroendocrine cells, chromaffin cells, pancreatic beta cells and from the soma of dorsal root ganglia (DRG) neurons. Interacts with SYTL4. Interacts with STXBP6. Interacts with PLCL1 (via C2 domain). Interacts with OTOF. Interacts with LGI3. Interacts (via the H3 domain) with SLC6A4 (via the N-terminus); this interaction regulates SLC4A6 channel conductance in thalamocortical neurons. Interacts with SYT6 and SYT8; the interaction is Ca(2+)-dependent. Interacts with VAMP8. Interacts with SNAP23. Interacts with VAPA and SYBU. Interacts with PRRT2. Interacts with SEPT8. Interacts with STXBP5L. Interacts with synaptotagmin-1/SYT1. Interacts with SEPTIN5; in the cerebellar cortex. Interacts with SEPTIN4; in the striatum. Phosphorylated by CK2. Phosphorylation at Ser-188 by DAPK1 significantly decreases its interaction with STXBP1. Post-translationally, (Microbial infection) Targeted and hydrolyzed by C.botulinum neurotoxin type C (BoNT/C), which hydrolyzes the 253-Lys-|-Ala-254 bond. Cleavage inhibits neurotransmitter release. In terms of processing, phosphorylated by CK2. Phosphorylation at Ser-188 by DAPK1 significantly decreases its interaction with STXBP1. Sumoylated, sumoylation is required for regulation of synaptic vesicle endocytosis. In terms of tissue distribution, expressed predominantly in cerebral cortex, hippocampus, cerebellum, adrenal medulla and retina with weak expression detected in non-neuronal tissues.

The protein resides in the cytoplasmic vesicle. The protein localises to the secretory vesicle. Its subcellular location is the synaptic vesicle membrane. It localises to the cell membrane. It is found in the synapse. The protein resides in the synaptosome. Plays an essential role in hormone and neurotransmitter calcium-dependent exocytosis and endocytosis. Part of the SNARE (Soluble NSF Attachment Receptor) complex composed of SNAP25, STX1A and VAMP2 which mediates the fusion of synaptic vesicles with the presynaptic plasma membrane. STX1A and SNAP25 are localized on the plasma membrane while VAMP2 resides in synaptic vesicles. The pairing of the three SNAREs from the N-terminal SNARE motifs to the C-terminal anchors leads to the formation of the SNARE complex, which brings membranes into close proximity and results in final fusion. Participates in the calcium-dependent regulation of acrosomal exocytosis in sperm. Also plays an important role in the exocytosis of hormones such as insulin or glucagon-like peptide 1 (GLP-1). The sequence is that of Syntaxin-1A (Stx1a) from Rattus norvegicus (Rat).